A 324-amino-acid polypeptide reads, in one-letter code: Zinc finger C2HC domain-containing protein 1A (324 aa).

The C2HC/C3H-type 1 zinc finger occupies 15-44 (ELLPCKICGRTFFPVALKKHGPICKKTATK). 4 residues coordinate Zn(2+): C19, C22, H34, and C38. The segment at 43–83 (TKKRKTFDSSRQRAEGTDIPTVKPLKPRPEPPKKPSNWRRK) is disordered. A compositionally biased stretch (basic and acidic residues) spans 48–58 (TFDSSRQRAEG). The C2HC/C3H-type 2 zinc finger occupies 118 to 147 (DYIQCPYCQRRFNENAADRHINFCKEQAAR). Residues C122, C125, H137, and C141 each coordinate Zn(2+). Disordered stretches follow at residues 150-224 (NKGK…LSPS) and 236-259 (NVKP…LTNK). Low complexity-rich tracts occupy residues 176–187 (SNSPGTASSGSS) and 196–215 (GKTV…SSLG). S222 carries the phosphoserine modification. T243 bears the Phosphothreonine mark. S291 carries the phosphoserine modification.

This sequence belongs to the ZC2HC1 family. It depends on Zn(2+) as a cofactor.

In Pongo abelii (Sumatran orangutan), this protein is Zinc finger C2HC domain-containing protein 1A (ZC2HC1A).